Reading from the N-terminus, the 254-residue chain is MSEQNNSHGNLILLRHGQSEWNASNQFTGWVDVRLTEKGRAEAVRGGEMIKEAGLEPTILYTSLLRRAITTANIALDAADRHWIPVVRDWRLNERHYGALQGLNKAETKDKYGEEQFMAWRRSYDTPPPAIDADNEYAQTNDPRYADLSEIPATECLLDVVKRFIPYYEEEIEPRVKNGETVLVAAHGNSLRALVKHLDKISDEDIAGLNIPTGIPLVYNIDADGKVLNPGGDYLDPEAAAAGAAAVAAQGQAK.

Substrate-binding positions include arginine 15–asparagine 22, threonine 28–glycine 29, arginine 67, glutamate 94–tyrosine 97, lysine 105, arginine 121–arginine 122, and glycine 188–asparagine 189. Histidine 16 serves as the catalytic Tele-phosphohistidine intermediate. Glutamate 94 acts as the Proton donor/acceptor in catalysis.

It belongs to the phosphoglycerate mutase family. BPG-dependent PGAM subfamily.

It catalyses the reaction (2R)-2-phosphoglycerate = (2R)-3-phosphoglycerate. The protein operates within carbohydrate degradation; glycolysis; pyruvate from D-glyceraldehyde 3-phosphate: step 3/5. Its function is as follows. Catalyzes the interconversion of 2-phosphoglycerate and 3-phosphoglycerate. The sequence is that of 2,3-bisphosphoglycerate-dependent phosphoglycerate mutase from Corynebacterium jeikeium (strain K411).